A 261-amino-acid polypeptide reads, in one-letter code: 3-methyl-2-oxobutanoate hydroxymethyltransferase (261 aa).

Residues Asp-42 and Asp-81 each coordinate Mg(2+). 3-methyl-2-oxobutanoate is bound by residues 42-43 (DS), Asp-81, and Lys-110. Position 112 (Glu-112) interacts with Mg(2+). Glu-179 serves as the catalytic Proton acceptor.

It belongs to the PanB family. Homodecamer; pentamer of dimers. Requires Mg(2+) as cofactor.

Its subcellular location is the cytoplasm. It carries out the reaction 3-methyl-2-oxobutanoate + (6R)-5,10-methylene-5,6,7,8-tetrahydrofolate + H2O = 2-dehydropantoate + (6S)-5,6,7,8-tetrahydrofolate. Its pathway is cofactor biosynthesis; coenzyme A biosynthesis. In terms of biological role, catalyzes the reversible reaction in which hydroxymethyl group from 5,10-methylenetetrahydrofolate is transferred onto alpha-ketoisovalerate to form ketopantoate. The polypeptide is 3-methyl-2-oxobutanoate hydroxymethyltransferase (Pyrobaculum neutrophilum (strain DSM 2338 / JCM 9278 / NBRC 100436 / V24Sta) (Thermoproteus neutrophilus)).